A 164-amino-acid chain; its full sequence is Transcription elongation factor GreA (164 aa).

It belongs to the GreA/GreB family.

Necessary for efficient RNA polymerase transcription elongation past template-encoded arresting sites. The arresting sites in DNA have the property of trapping a certain fraction of elongating RNA polymerases that pass through, resulting in locked ternary complexes. Cleavage of the nascent transcript by cleavage factors such as GreA or GreB allows the resumption of elongation from the new 3'terminus. GreA releases sequences of 2 to 3 nucleotides. The chain is Transcription elongation factor GreA from Helicobacter acinonychis (strain Sheeba).